A 114-amino-acid chain; its full sequence is UPF0757 protein YmgG (114 aa).

This sequence belongs to the UPF0757 family.

In Edwardsiella ictaluri (strain 93-146), this protein is UPF0757 protein YmgG.